The following is a 71-amino-acid chain: Small ribosomal subunit protein bS21 (71 aa).

It belongs to the bacterial ribosomal protein bS21 family.

In Shewanella sediminis (strain HAW-EB3), this protein is Small ribosomal subunit protein bS21.